The sequence spans 236 residues: Purine nucleoside phosphorylase DeoD-type (236 aa).

His5 serves as a coordination point for a purine D-ribonucleoside. Residues Gly21, Arg25, Arg44, and 88–91 (RIGS) contribute to the phosphate site. A purine D-ribonucleoside is bound by residues 180-182 (EME) and 204-205 (SD). The active-site Proton donor is Asp205.

It belongs to the PNP/UDP phosphorylase family. Homohexamer; trimer of homodimers.

The catalysed reaction is a purine D-ribonucleoside + phosphate = a purine nucleobase + alpha-D-ribose 1-phosphate. The enzyme catalyses a purine 2'-deoxy-D-ribonucleoside + phosphate = a purine nucleobase + 2-deoxy-alpha-D-ribose 1-phosphate. Its function is as follows. Catalyzes the reversible phosphorolytic breakdown of the N-glycosidic bond in the beta-(deoxy)ribonucleoside molecules, with the formation of the corresponding free purine bases and pentose-1-phosphate. The chain is Purine nucleoside phosphorylase DeoD-type from Tolumonas auensis (strain DSM 9187 / NBRC 110442 / TA 4).